A 178-amino-acid chain; its full sequence is Large ribosomal subunit protein uL6 (178 aa).

Belongs to the universal ribosomal protein uL6 family. Part of the 50S ribosomal subunit.

Its function is as follows. This protein binds to the 23S rRNA, and is important in its secondary structure. It is located near the subunit interface in the base of the L7/L12 stalk, and near the tRNA binding site of the peptidyltransferase center. This Ligilactobacillus salivarius (strain UCC118) (Lactobacillus salivarius) protein is Large ribosomal subunit protein uL6.